Reading from the N-terminus, the 308-residue chain is METSEHIPVLLAEAVAALEIAPNGRYLDATFGRGGHSSEILAQLGESGQLYALDRDQQAAAVAAQITDPRFHFARCAFSEMETAFAALGAESLDGILFDLGVSSPQLDDPSRGFSFAKEGPLDMRMDNEQNLTAQKWLKNVDEDTLTTVIRDYGGEPHTVAKRIAKAILAAKNDLKSTLDLASVVAQARPKKLYKPHLHPATQTFQAIRIAVNDEIGEIQRALRAATMMLKSGGILVVISFHGLEDATVKRFVRSMEGEPLPAEIPATNTTNIHQVLRLVPPVIKPSSAEIAQNPRSRSAKLRKAVKL.

Residues 34-36 (GGH), Asp54, Phe85, Asp99, and Gln106 contribute to the S-adenosyl-L-methionine site.

This sequence belongs to the methyltransferase superfamily. RsmH family.

The protein resides in the cytoplasm. It catalyses the reaction cytidine(1402) in 16S rRNA + S-adenosyl-L-methionine = N(4)-methylcytidine(1402) in 16S rRNA + S-adenosyl-L-homocysteine + H(+). Functionally, specifically methylates the N4 position of cytidine in position 1402 (C1402) of 16S rRNA. The sequence is that of Ribosomal RNA small subunit methyltransferase H from Dichelobacter nodosus (strain VCS1703A).